A 246-amino-acid polypeptide reads, in one-letter code: MLYLHDVWVNWFEGEENGYNVCHFHEWRKDDQVELLDQVPLLKVSSALFNYIENSLSEIPKQLLEDVYQKAYVRKNHERIQLDYCFVITDGYGILAVDTIGYNIPIRKSRLIPRQEQLVYEMVAEHQEEPYPLPAHEKEYHILSPSPEWMMGLTRKERQLKQLLFMALDQLHLTKNVAEVRYWYTEWAPQKYPDIQKMSFEEAWQHLYEETKYGWSDKHEQLCEKLIKGQPFFEKLWEMEQEPKVN.

The protein belongs to the UPF0736 family.

This is UPF0736 protein GWCH70_0753 from Geobacillus sp. (strain WCH70).